The sequence spans 650 residues: uncharacterized protein (650 aa).

It belongs to the MG032/MG096/MG288 family.

This is an uncharacterized protein from Mycoplasma genitalium (strain ATCC 33530 / DSM 19775 / NCTC 10195 / G37) (Mycoplasmoides genitalium).